Consider the following 603-residue polypeptide: Flavin-dependent halogenase chlA (603 aa).

FAD-binding residues include Gly16, Ala19, and Glu59. 2 residues coordinate chloride: Thr352 and Gly353.

The protein belongs to the flavin-dependent halogenase family.

It catalyses the reaction 2,4,6-trihydroxyphenylhexan-1-one + FADH2 + chloride + O2 = (3-chloro-2,4,6-trihydroxyphenyl)hexan-1-one + FAD + 2 H2O + H(+). It carries out the reaction (3-chloro-2,4,6-trihydroxyphenyl)hexan-1-one + FADH2 + chloride + O2 = (3,5-dichloro-2,4,6-trihydroxyphenyl)hexan-1-one + FAD + 2 H2O. In terms of biological role, flavin-dependent halogenase; part of the gene cluster that mediates the biosynthesis of DIF-1 (Differentiation Inducing Factor-1), a signal molecule involved in the differentiation of pstO (prestalk-O) cells. The three-step process begins with the formation of (2,4,6-trihydroxyphenyl)-1-hexan-1-one (THPH) by the polyketide synthase StlB. THPH is then dichlorinated by the flavin-dependent halogenase ChlA. The last step of DIF-1 biosynthesis is the O-methylation of dichloro-THPH (or des-methyl-DIF-1) by the methyltransferase DmtA to yield DIF-1. This chain is Flavin-dependent halogenase chlA, found in Dictyostelium discoideum (Social amoeba).